Here is a 138-residue protein sequence, read N- to C-terminus: ATP synthase epsilon chain (138 aa).

Belongs to the ATPase epsilon chain family. In terms of assembly, F-type ATPases have 2 components, CF(1) - the catalytic core - and CF(0) - the membrane proton channel. CF(1) has five subunits: alpha(3), beta(3), gamma(1), delta(1), epsilon(1). CF(0) has three main subunits: a, b and c.

Its subcellular location is the cell inner membrane. Produces ATP from ADP in the presence of a proton gradient across the membrane. This chain is ATP synthase epsilon chain, found in Cupriavidus necator (strain ATCC 17699 / DSM 428 / KCTC 22496 / NCIMB 10442 / H16 / Stanier 337) (Ralstonia eutropha).